Here is a 236-residue protein sequence, read N- to C-terminus: Purine nucleoside phosphorylase DeoD-type (236 aa).

Residue H5 participates in a purine D-ribonucleoside binding. Residues G21, R25, R44, and 88–91 each bind phosphate; that span reads RVGT. Residues 180–182 and 204–205 each bind a purine D-ribonucleoside; these read EME and SD. D205 functions as the Proton donor in the catalytic mechanism.

Belongs to the PNP/UDP phosphorylase family. In terms of assembly, homohexamer; trimer of homodimers.

It catalyses the reaction a purine D-ribonucleoside + phosphate = a purine nucleobase + alpha-D-ribose 1-phosphate. The catalysed reaction is a purine 2'-deoxy-D-ribonucleoside + phosphate = a purine nucleobase + 2-deoxy-alpha-D-ribose 1-phosphate. Functionally, catalyzes the reversible phosphorolytic breakdown of the N-glycosidic bond in the beta-(deoxy)ribonucleoside molecules, with the formation of the corresponding free purine bases and pentose-1-phosphate. This is Purine nucleoside phosphorylase DeoD-type from Shewanella denitrificans (strain OS217 / ATCC BAA-1090 / DSM 15013).